A 620-amino-acid polypeptide reads, in one-letter code: Chaperone protein DnaK (620 aa).

A Phosphothreonine; by autocatalysis modification is found at Thr-197. Residues 597 to 620 (AMANKNNAEQPKKKDDDVIDAEVE) form a disordered region.

This sequence belongs to the heat shock protein 70 family.

Its function is as follows. Acts as a chaperone. The chain is Chaperone protein DnaK from Helicobacter pylori (strain G27).